The chain runs to 633 residues: Putative ankyrin repeat protein L774 (633 aa).

ANK repeat units follow at residues 91 to 120, 123 to 152, 221 to 250, 252 to 275, 338 to 367, 369 to 393, and 517 to 546; these read IYGH…EYDP, NCDD…FFKI, NVNK…EYDF, TILK…ILDS, DYDV…DVNN, MTYA…TLST, and DNLK…NSND.

This chain is Putative ankyrin repeat protein L774, found in Acanthamoeba polyphaga mimivirus (APMV).